The sequence spans 481 residues: Trichosetin biosynthesis cluster MFS transporter (481 aa).

Polar residues predominate over residues 1–13 (MSTTPQMSQSGFQ). Positions 1-63 (MSTTPQMSQS…DGPDDPQHPL (63 aa)) are disordered. Basic and acidic residues predominate over residues 20 to 31 (GAREDVGTEAQE). Residue Asn64 is glycosylated (N-linked (GlcNAc...) asparagine). A helical transmembrane segment spans residues 72-92 (LHVGIVSLSTLAANLAATMFA). The N-linked (GlcNAc...) asparagine glycan is linked to Asn103. A run of 5 helical transmembrane segments spans residues 111–131 (AMTVSLYVLGFALGPLLLAPL), 147–167 (VYMAFTIGCAFSTNVAMFLVF), 169–189 (IIAGCAASGPMSIGGGTVADL), 200–220 (ALFAVGPLLGPVIGPIIGGFV), and 228–248 (WTFRILLILSGILATVTFALM). The N-linked (GlcNAc...) asparagine glycan is linked to Asn252. Helical transmembrane passes span 302 to 322 (PIVLLVSLYTGILFGLIFLLF), 353 to 373 (LLLMKWLGPITPLGLFIYGWT), 380 to 400 (WIVPIIGTFIVGFGSLFVVIP), 403 to 423 (IYLVDAFGAEAAASAMAANLL), and 446 to 466 (GWGNSVLGFITLAFTPVPWIF).

This sequence belongs to the major facilitator superfamily.

It localises to the cell membrane. Its function is as follows. Efflux pump required for efficient secretion of trichosetin or other secondary metabolies produced by the trichosetin gene cluster. Plays a crucial role in detoxification of the toxic trichosetin in Gibberella fujikuroi cells. In Gibberella fujikuroi (strain CBS 195.34 / IMI 58289 / NRRL A-6831) (Bakanae and foot rot disease fungus), this protein is Trichosetin biosynthesis cluster MFS transporter.